The chain runs to 473 residues: Catalase easC (473 aa).

Low complexity predominate over residues 1–15 (MASEVSVASSGSEHS). The tract at residues 1–31 (MASEVSVASSGSEHSGAQKCPFQDPGLSSMD) is disordered. Residue His-54 is part of the active site. A heme-binding site is contributed by Tyr-344. Residues 352 to 389 (LGPNNLDLPANRTKKLADGSRPEKAEMAPQKVPSQEHA) form a disordered region. The segment covering 366–377 (KLADGSRPEKAE) has biased composition (basic and acidic residues).

Belongs to the catalase family. The cofactor is heme.

It functions in the pathway alkaloid biosynthesis; ergot alkaloid biosynthesis. In terms of biological role, catalase; part of the gene cluster that mediates the biosynthesis of fungal ergot alkaloid. DmaW catalyzes the first step of ergot alkaloid biosynthesis by condensing dimethylallyl diphosphate (DMAP) and tryptophan to form 4-dimethylallyl-L-tryptophan. The second step is catalyzed by the methyltransferase easF that methylates 4-dimethylallyl-L-tryptophan in the presence of S-adenosyl-L-methionine, resulting in the formation of 4-dimethylallyl-L-abrine. The catalase easC and the FAD-dependent oxidoreductase easE then transform 4-dimethylallyl-L-abrine to chanoclavine-I which is further oxidized by easD in the presence of NAD(+), resulting in the formation of chanoclavine-I aldehyde. Agroclavine dehydrogenase easG then mediates the conversion of chanoclavine-I aldehyde to agroclavine via a non-enzymatic adduct reaction: the substrate is an iminium intermediate that is formed spontaneously from chanoclavine-I aldehyde in the presence of glutathione. The presence of easA is not required to complete this reaction. Further conversion of agroclavine to paspalic acid is a two-step process involving oxidation of agroclavine to elymoclavine and of elymoclavine to paspalic acid, the second step being performed by the elymoclavine oxidase cloA. Paspalic acid is then further converted to D-lysergic acid. Ergopeptines are assembled from D-lysergic acid and three different amino acids by the D-lysergyl-peptide-synthetases composed each of a monomudular and a trimodular nonribosomal peptide synthetase subunit. LpsB and lpsC encode the monomodular subunits responsible for D-lysergic acid activation and incorporation into the ergopeptine backbone. LpsA1 and A2 subunits encode the trimodular nonribosomal peptide synthetase assembling the tripeptide portion of ergopeptines. LpsA1 is responsible for formation of the major ergopeptine, ergotamine, and lpsA2 for alpha-ergocryptine, the minor ergopeptine of the total alkaloid mixture elaborated by C.purpurea. D-lysergyl-tripeptides are assembled by the nonribosomal peptide synthetases and released as N-(D-lysergyl-aminoacyl)-lactams. Cyclolization of the D-lysergyl-tripeptides is performed by the Fe(2+)/2-ketoglutarate-dependent dioxygenase easH which introduces a hydroxyl group into N-(D-lysergyl-aminoacyl)-lactam at alpha-C of the aminoacyl residue followed by spontaneous condensation with the terminal lactam carbonyl group. In Claviceps purpurea (strain 20.1) (Ergot fungus), this protein is Catalase easC.